Reading from the N-terminus, the 927-residue chain is Alpha-catenin-like protein hmp-1 (927 aa).

2 coiled-coil regions span residues 319–354 (TRENRKQKIVAECNNLRQALQELLTEYEKSTGRRDD) and 672–696 (QENQQNLMRRLPEEEKKKIQAQIDI). Residues 901–927 (RNEIETGRDSDDEELDRRHQQRINGRL) are disordered.

It belongs to the vinculin/alpha-catenin family. As to quaternary structure, component of a core catenin-cadherin complex consisting of hmr-1, hmp-1 and hmp-2; the complex localizes to adherens junctions. May interact with hmp-2. Epidermal cells.

The protein localises to the cell junction. It localises to the adherens junction. The protein resides in the cytoplasm. Functionally, required for cell migration during body enclosure and cell shape changes during body elongation. Required for proper localization of other junctional components, such as pac-1. The chain is Alpha-catenin-like protein hmp-1 (hmp-1) from Caenorhabditis elegans.